A 498-amino-acid chain; its full sequence is Probable malate:quinone oxidoreductase 2 (498 aa).

It belongs to the MQO family. FAD is required as a cofactor.

The catalysed reaction is (S)-malate + a quinone = a quinol + oxaloacetate. It functions in the pathway carbohydrate metabolism; tricarboxylic acid cycle; oxaloacetate from (S)-malate (quinone route): step 1/1. This Staphylococcus aureus (strain COL) protein is Probable malate:quinone oxidoreductase 2.